Here is a 317-residue protein sequence, read N- to C-terminus: L-lactate dehydrogenase 1 (317 aa).

Residues Val-17, Asp-38, Lys-43, Tyr-69, and 83–84 (GA) each bind NAD(+). 2 residues coordinate substrate: Gln-86 and Arg-92. Residues Ser-105, 122 to 124 (ATN), and Ser-147 contribute to the NAD(+) site. 124–127 (NPVD) lines the substrate pocket. 152-155 (DSAR) contributes to the substrate binding site. Residue His-179 is the Proton acceptor of the active site. Residue Tyr-223 is modified to Phosphotyrosine. Thr-232 serves as a coordination point for substrate.

Belongs to the LDH/MDH superfamily. LDH family. As to quaternary structure, homotetramer.

Its subcellular location is the cytoplasm. The enzyme catalyses (S)-lactate + NAD(+) = pyruvate + NADH + H(+). The protein operates within fermentation; pyruvate fermentation to lactate; (S)-lactate from pyruvate: step 1/1. Functionally, catalyzes the conversion of lactate to pyruvate (Potential). Appears to be the primary factor that allows S.aureus growth during nitrosative stress in both aerobically and anaerobically cultured cells. The chain is L-lactate dehydrogenase 1 from Staphylococcus aureus (strain bovine RF122 / ET3-1).